A 566-amino-acid chain; its full sequence is Proline--tRNA ligase (566 aa).

It belongs to the class-II aminoacyl-tRNA synthetase family. ProS type 1 subfamily. In terms of assembly, homodimer.

Its subcellular location is the cytoplasm. It catalyses the reaction tRNA(Pro) + L-proline + ATP = L-prolyl-tRNA(Pro) + AMP + diphosphate. In terms of biological role, catalyzes the attachment of proline to tRNA(Pro) in a two-step reaction: proline is first activated by ATP to form Pro-AMP and then transferred to the acceptor end of tRNA(Pro). As ProRS can inadvertently accommodate and process non-cognate amino acids such as alanine and cysteine, to avoid such errors it has two additional distinct editing activities against alanine. One activity is designated as 'pretransfer' editing and involves the tRNA(Pro)-independent hydrolysis of activated Ala-AMP. The other activity is designated 'posttransfer' editing and involves deacylation of mischarged Ala-tRNA(Pro). The misacylated Cys-tRNA(Pro) is not edited by ProRS. The chain is Proline--tRNA ligase from Shouchella clausii (strain KSM-K16) (Alkalihalobacillus clausii).